The following is a 464-amino-acid chain: Non-neuronal cytoplasmic intermediate filament protein (464 aa).

A compositionally biased stretch (polar residues) spans 1–14 (MSTQTKKVTRTIIT). Residues 1 to 59 (MSTQTKKVTRTIITSSSGGGGGGGGGRASYSSSGRFSGGGGRMRAGGVTSRRSVGSSYS) form a disordered region. A head region spans residues 1–101 (MSTQTKKVTR…RMTRAHEKQE (101 aa)). Residues 17–27 (SGGGGGGGGGR) show a composition bias toward gly residues. Residues 45–59 (AGGVTSRRSVGSSYS) are compositionally biased toward low complexity. In terms of domain architecture, IF rod spans 98–413 (EKQELSHLND…KLLEGEEIRL (316 aa)). The segment at 102 to 133 (LSHLNDRFASYIDKVRYLQERNSKLEAQIKIQ) is coil 1A. Residues 134–144 (ESREAPNIKDL) form a linker 1 region. Residues 145–237 (YEKELRDLRA…FLKRVHDEEI (93 aa)) are coil 1B. The tract at residues 238 to 264 (RQLQDQLNESLTIVEVDSRAASTFAPG) is linker 2. The segment at 265–413 (PDLTEALREI…KLLEGEEIRL (149 aa)) is coil 2. A tail region spans residues 414–464 (FGESKEGVQQTSSSSSSSYQYSMKSGSGGGGGGSSSGKQQVTVSVSSGEEK). The interval 415–464 (GESKEGVQQTSSSSSSSYQYSMKSGSGGGGGGSSSGKQQVTVSVSSGEEK) is disordered. The span at 420–438 (GVQQTSSSSSSSYQYSMKS) shows a compositional bias: low complexity. The segment covering 439–448 (GSGGGGGGSS) has biased composition (gly residues). Positions 449 to 464 (SGKQQVTVSVSSGEEK) are enriched in low complexity.

Belongs to the intermediate filament family. In terms of assembly, can form homopolymers.

It is found in the cytoplasm. The sequence is that of Non-neuronal cytoplasmic intermediate filament protein from Branchiostoma lanceolatum (Common lancelet).